The chain runs to 217 residues: 4-hydroxy-tetrahydrodipicolinate reductase (217 aa).

Residues 7–12 (GFKGKM), 71–73 (GTT), and 95–98 (SYNF) each bind NAD(+). The active-site Proton donor/acceptor is the His127. A (S)-2,3,4,5-tetrahydrodipicolinate-binding site is contributed by His128. The active-site Proton donor is the Lys131. Position 137–138 (137–138 (GT)) interacts with (S)-2,3,4,5-tetrahydrodipicolinate.

Belongs to the DapB family.

Its subcellular location is the cytoplasm. The catalysed reaction is (S)-2,3,4,5-tetrahydrodipicolinate + NAD(+) + H2O = (2S,4S)-4-hydroxy-2,3,4,5-tetrahydrodipicolinate + NADH + H(+). It carries out the reaction (S)-2,3,4,5-tetrahydrodipicolinate + NADP(+) + H2O = (2S,4S)-4-hydroxy-2,3,4,5-tetrahydrodipicolinate + NADPH + H(+). It participates in amino-acid biosynthesis; L-lysine biosynthesis via DAP pathway; (S)-tetrahydrodipicolinate from L-aspartate: step 4/4. Functionally, catalyzes the conversion of 4-hydroxy-tetrahydrodipicolinate (HTPA) to tetrahydrodipicolinate. The sequence is that of 4-hydroxy-tetrahydrodipicolinate reductase from Thermosipho africanus (strain TCF52B).